The sequence spans 347 residues: NADH-ubiquinone oxidoreductase chain 2 (347 aa).

Transmembrane regions (helical) follow at residues V13 to F33, Y59 to M79, M96 to P116, I122 to L142, I149 to G169, I178 to P198, M200 to M220, I240 to F260, I276 to L296, and L325 to I345.

The protein belongs to the complex I subunit 2 family. Core subunit of respiratory chain NADH dehydrogenase (Complex I) which is composed of 45 different subunits. Interacts with TMEM242.

Its subcellular location is the mitochondrion inner membrane. It carries out the reaction a ubiquinone + NADH + 5 H(+)(in) = a ubiquinol + NAD(+) + 4 H(+)(out). In terms of biological role, core subunit of the mitochondrial membrane respiratory chain NADH dehydrogenase (Complex I) which catalyzes electron transfer from NADH through the respiratory chain, using ubiquinone as an electron acceptor. Essential for the catalytic activity and assembly of complex I. This is NADH-ubiquinone oxidoreductase chain 2 from Molossus ater (Black mastiff bat).